Consider the following 467-residue polypeptide: 3-isopropylmalate dehydratase large subunit (467 aa).

Residues Cys-347, Cys-407, and Cys-410 each contribute to the [4Fe-4S] cluster site.

Belongs to the aconitase/IPM isomerase family. LeuC type 1 subfamily. Heterodimer of LeuC and LeuD. [4Fe-4S] cluster is required as a cofactor.

It carries out the reaction (2R,3S)-3-isopropylmalate = (2S)-2-isopropylmalate. It participates in amino-acid biosynthesis; L-leucine biosynthesis; L-leucine from 3-methyl-2-oxobutanoate: step 2/4. Its function is as follows. Catalyzes the isomerization between 2-isopropylmalate and 3-isopropylmalate, via the formation of 2-isopropylmaleate. The sequence is that of 3-isopropylmalate dehydratase large subunit from Synechococcus sp. (strain JA-3-3Ab) (Cyanobacteria bacterium Yellowstone A-Prime).